Consider the following 359-residue polypeptide: Ferredoxin--NADP reductase (359 aa).

FAD contacts are provided by D48, Q56, Y61, A101, F139, D304, and S345.

The protein belongs to the ferredoxin--NADP reductase type 2 family. In terms of assembly, homodimer. FAD serves as cofactor.

It catalyses the reaction 2 reduced [2Fe-2S]-[ferredoxin] + NADP(+) + H(+) = 2 oxidized [2Fe-2S]-[ferredoxin] + NADPH. The chain is Ferredoxin--NADP reductase from Ralstonia pickettii (strain 12J).